Reading from the N-terminus, the 200-residue chain is High frequency lysogenization protein HflD homolog (200 aa).

This sequence belongs to the HflD family.

It localises to the cytoplasm. Its subcellular location is the cell inner membrane. This Pseudoalteromonas translucida (strain TAC 125) protein is High frequency lysogenization protein HflD homolog.